Reading from the N-terminus, the 423-residue chain is Histidine--tRNA ligase (423 aa).

The protein belongs to the class-II aminoacyl-tRNA synthetase family. In terms of assembly, homodimer.

Its subcellular location is the cytoplasm. It catalyses the reaction tRNA(His) + L-histidine + ATP = L-histidyl-tRNA(His) + AMP + diphosphate + H(+). The polypeptide is Histidine--tRNA ligase (Moorella thermoacetica (strain ATCC 39073 / JCM 9320)).